We begin with the raw amino-acid sequence, 128 residues long: Modulator protein MzrA (128 aa).

The Cytoplasmic portion of the chain corresponds to 1–13; that stretch reads MLALLRPYLSTRV. A helical transmembrane segment spans residues 14 to 34; that stretch reads LCVLVVCFSALMLVAFIPTLF. Topologically, residues 35–128 are periplasmic; that stretch reads RNDTALQIRA…RLSLRKQSVG (94 aa).

It belongs to the MzrA family. Interacts with EnvZ.

The protein localises to the cell inner membrane. Its function is as follows. Modulates the activity of the EnvZ/OmpR two-component regulatory system, probably by directly modulating EnvZ enzymatic activity and increasing stability of phosphorylated OmpR. This Erwinia billingiae (strain Eb661) protein is Modulator protein MzrA.